A 460-amino-acid chain; its full sequence is Keratin, type I cytoskeletal 27 (460 aa).

The segment at 1 to 83 (MSVRFSSASR…GNEHGLLSGN (83 aa)) is head. The coil 1A stretch occupies residues 84–119 (EKVTMQNLNDRLASYLDNVRALEEANADLEQKIKGW). The IF rod domain maps to 84 to 399 (EKVTMQNLND…RLIDGEDGSC (316 aa)). The segment at 120-141 (YEKFGPGSCRGLDHDYSRYFTV) is linker 1. Residues 142-233 (IDDLRNQIIS…KNHEEEMKAL (92 aa)) are coil 1B. Residues 234 to 256 (QCAAGGNVNVEMNAAPGVDLTVL) are linker 12. The interval 257–395 (LNNMRAEYEA…ETYCRLIDGE (139 aa)) is coil 2. Residues 396-460 (DGSCAKSKGY…NVKSEQRVPS (65 aa)) are tail. The interval 435-460 (LSSRVHSVEEKSTKVNNVKSEQRVPS) is disordered. Over residues 448 to 460 (KVNNVKSEQRVPS) the composition is skewed to polar residues.

This sequence belongs to the intermediate filament family. In terms of assembly, heterotetramer of two type I and two type II keratins. Interacts with KRT6A to form filaments.

It localises to the cytoplasm. In terms of biological role, essential for the proper assembly of type I and type II keratin protein complexes and formation of keratin intermediate filaments in the inner root sheath (irs). This chain is Keratin, type I cytoskeletal 27, found in Bos taurus (Bovine).